The primary structure comprises 277 residues: Putative gamma-glutamylcyclotransferase YkqA (277 aa).

Residue 8–11 (YGTL) coordinates substrate. Glutamate 205 (proton acceptor) is an active-site residue.

The protein belongs to the gamma-glutamylcyclotransferase family.

Putative gamma-glutamylcyclotransferase. The protein is Putative gamma-glutamylcyclotransferase YkqA (ykqA) of Bacillus subtilis (strain 168).